The chain runs to 249 residues: MNRNDKQAYDRGTSLFSPDGRIYQVEYAREAVKRGAPVLGVRTADGVVLAALRSTPSELMEAESIEKLHKLDDALGAATAGHVADARKLVDFARTTAQREHLRYGEPIGVETLTKTITDNIQESTQSGGTRPYGASLLIGGVENGSGRLFATDPSGTPQEWKAVAIGGHREDVQAALEDGYAEDLSLEDGLALAVEALVAADEEIESDELNLVTVSEAGYEIVDEETIAELFADATADDESDETDEREE.

The residue at position 1 (methionine 1) is an N-acetylmethionine.

Belongs to the peptidase T1A family. In terms of assembly, the 20S proteasome core is composed of 14 alpha and 14 beta subunits that assemble into four stacked heptameric rings, resulting in a barrel-shaped structure. The two inner rings, each composed of seven catalytic beta subunits, are sandwiched by two outer rings, each composed of seven alpha subunits. H.volcanii produces at least 2 types of 20S proteasomes: an alpha1-beta proteasome and a proteasome containing all three subunits (alpha1, alpha2, and beta) that appears to be asymmetrical with homo-oligomeric alpha1 and alpha2 rings positioned on separate ends. The catalytic chamber with the active sites is on the inside of the barrel. Has probably a gated structure, the ends of the cylinder being occluded by the N-termini of the alpha-subunits. Is likely capped at one or both ends by the proteasome regulatory ATPase, PAN.

It is found in the cytoplasm. Its activity is regulated as follows. The formation of the proteasomal ATPase PAN-20S proteasome complex, via the docking of the C-termini of PAN into the intersubunit pockets in the alpha-rings, triggers opening of the gate for substrate entry. Interconversion between the open-gate and close-gate conformations leads to a dynamic regulation of the 20S proteasome proteolysis activity. In terms of biological role, component of the proteasome core, a large protease complex with broad specificity involved in protein degradation. The H.volcanii alpha1-beta-alpha2 proteasome is able to cleave oligopeptides after Tyr and thus displays chymotrypsin-like activity. The chain is Proteasome subunit alpha 2 from Haloferax volcanii (strain ATCC 29605 / DSM 3757 / JCM 8879 / NBRC 14742 / NCIMB 2012 / VKM B-1768 / DS2) (Halobacterium volcanii).